A 50-amino-acid polypeptide reads, in one-letter code: uncharacterized protein (50 aa).

This is an uncharacterized protein from Treponema pallidum (strain Nichols).